The chain runs to 1013 residues: Sodium/potassium-transporting ATPase subunit alpha-3 (1013 aa).

The segment covering 1–10 has biased composition (basic and acidic residues); it reads MGDKKDDKSS. Positions 1-24 are disordered; sequence MGDKKDDKSSPKKSKAKERRDLDD. At 1 to 77 the chain is on the cytoplasmic side; the sequence is MGDKKDDKSS…NALTPPPTTP (77 aa). Serine 37 and serine 56 each carry phosphoserine. An interaction with phosphoinositide-3 kinase region spans residues 72–74; it reads PPP. A helical transmembrane segment spans residues 78–98; that stretch reads EWVKFCRQLFGGFSILLWIGA. Residues 99–121 lie on the Extracellular side of the membrane; sequence ILCFLAYGIQAGTEDDPSGDNLY. A helical transmembrane segment spans residues 122–142; that stretch reads LGIVLAAVVIITGCFSYYQEA. Topologically, residues 143–278 are cytoplasmic; it reads KSSKIMESFK…VGKTPIAIEI (136 aa). A phosphoserine mark is found at serine 218 and serine 265. A helical transmembrane segment spans residues 279–298; it reads EHFIQLITGVAVFLGVSFFI. The Extracellular portion of the chain corresponds to 299–310; sequence LSLILGYTWLEA. Residues 311-328 traverse the membrane as a helical segment; sequence VIFLIGIIVANVPEGLLA. The Cytoplasmic portion of the chain corresponds to 329–762; the sequence is TVTVCLTLTA…EEGRLIFDNL (434 aa). Aspartate 366 functions as the 4-aspartylphosphate intermediate in the catalytic mechanism. Residue serine 442 is modified to Phosphoserine. Position 548 is a phosphotyrosine (tyrosine 548). Mg(2+)-binding residues include aspartate 707 and aspartate 711. The helical transmembrane segment at 763–782 threads the bilayer; it reads KKSIAYTLTSNIPEITPFLL. The Extracellular portion of the chain corresponds to 783–792; sequence FIMANIPLPL. The chain crosses the membrane as a helical span at residues 793 to 813; that stretch reads GTITILCIDLGTDMVPAISLA. Topologically, residues 814 to 833 are cytoplasmic; it reads YEAAESDIMKRQPRNPRTDK. A helical membrane pass occupies residues 834 to 856; the sequence is LVNERLISMAYGQIGMIQALGGF. Residues 857 to 908 lie on the Extracellular side of the membrane; it reads FSYFVILAENGFLPGNLVGIRLNWDDRTVNDLEDSYGQQWTYEQRKVVEFTC. Residues 909–928 form a helical membrane-spanning segment; sequence HTAFFVSIVVVQWADLIICK. Over 929 to 941 the chain is Cytoplasmic; it reads TRRNSVFQQGMKN. Serine 933 bears the Phosphoserine; by PKA mark. Residues 942–960 form a helical membrane-spanning segment; the sequence is KILIFGLFEETALAAFLSY. Residues 961–975 lie on the Extracellular side of the membrane; that stretch reads CPGMDVALRMYPLKP. Residues 976–996 traverse the membrane as a helical segment; the sequence is SWWFCAFPYSFLIFVYDEIRK. The Cytoplasmic segment spans residues 997-1013; it reads LILRRNPGGWVEKETYY.

The protein belongs to the cation transport ATPase (P-type) (TC 3.A.3) family. Type IIC subfamily. The sodium/potassium-transporting ATPase is composed of a catalytic alpha subunit, an auxiliary non-catalytic beta subunit and an additional regulatory subunit. Interacts with regulatory subunit FXYD1.

It is found in the cell membrane. It catalyses the reaction K(+)(out) + Na(+)(in) + ATP + H2O = K(+)(in) + Na(+)(out) + ADP + phosphate + H(+). Its function is as follows. This is the catalytic component of the active enzyme, which catalyzes the hydrolysis of ATP coupled with the exchange of sodium and potassium ions across the plasma membrane. This action creates the electrochemical gradient of sodium and potassium ions, providing the energy for active transport of various nutrients. This is Sodium/potassium-transporting ATPase subunit alpha-3 (Atp1a3) from Mus musculus (Mouse).